The primary structure comprises 192 residues: Probable nicotinate-nucleotide adenylyltransferase (192 aa).

It belongs to the NadD family.

It catalyses the reaction nicotinate beta-D-ribonucleotide + ATP + H(+) = deamido-NAD(+) + diphosphate. Its pathway is cofactor biosynthesis; NAD(+) biosynthesis; deamido-NAD(+) from nicotinate D-ribonucleotide: step 1/1. Catalyzes the reversible adenylation of nicotinate mononucleotide (NaMN) to nicotinic acid adenine dinucleotide (NaAD). The sequence is that of Probable nicotinate-nucleotide adenylyltransferase from Bradyrhizobium sp. (strain BTAi1 / ATCC BAA-1182).